We begin with the raw amino-acid sequence, 729 residues long: Phosphoribosylformylglycinamidine synthase subunit PurL (729 aa).

His54 is a catalytic residue. The ATP site is built by Tyr57 and Lys96. Glu98 is a Mg(2+) binding site. Substrate contacts are provided by residues Ser99 to His102 and Arg121. His100 acts as the Proton acceptor in catalysis. Asp122 provides a ligand contact to Mg(2+). Gln245 lines the substrate pocket. A Mg(2+)-binding site is contributed by Asp273. Glu317–Gln319 provides a ligand contact to substrate. ATP-binding residues include Asp495 and Gly532. Position 533 (Asn533) interacts with Mg(2+). Ser535 provides a ligand contact to substrate.

The protein belongs to the FGAMS family. As to quaternary structure, monomer. Part of the FGAM synthase complex composed of 1 PurL, 1 PurQ and 2 PurS subunits.

It localises to the cytoplasm. It carries out the reaction N(2)-formyl-N(1)-(5-phospho-beta-D-ribosyl)glycinamide + L-glutamine + ATP + H2O = 2-formamido-N(1)-(5-O-phospho-beta-D-ribosyl)acetamidine + L-glutamate + ADP + phosphate + H(+). The protein operates within purine metabolism; IMP biosynthesis via de novo pathway; 5-amino-1-(5-phospho-D-ribosyl)imidazole from N(2)-formyl-N(1)-(5-phospho-D-ribosyl)glycinamide: step 1/2. Functionally, part of the phosphoribosylformylglycinamidine synthase complex involved in the purines biosynthetic pathway. Catalyzes the ATP-dependent conversion of formylglycinamide ribonucleotide (FGAR) and glutamine to yield formylglycinamidine ribonucleotide (FGAM) and glutamate. The FGAM synthase complex is composed of three subunits. PurQ produces an ammonia molecule by converting glutamine to glutamate. PurL transfers the ammonia molecule to FGAR to form FGAM in an ATP-dependent manner. PurS interacts with PurQ and PurL and is thought to assist in the transfer of the ammonia molecule from PurQ to PurL. In Staphylococcus aureus (strain USA300), this protein is Phosphoribosylformylglycinamidine synthase subunit PurL.